The chain runs to 144 residues: Putative pre-16S rRNA nuclease (144 aa).

This sequence belongs to the YqgF nuclease family.

The protein resides in the cytoplasm. Could be a nuclease involved in processing of the 5'-end of pre-16S rRNA. This is Putative pre-16S rRNA nuclease from Blochmanniella pennsylvanica (strain BPEN).